The sequence spans 246 residues: Small ribosomal subunit protein uS3 (246 aa).

Residues 19 to 98 form the KH type-2 domain; the sequence is IDEWLAQNFY…NPMLDARVQA (80 aa). The interval 218 to 246 is disordered; it reads LQEETASTLREHMEAARPGEEHEEDREES. Residues 226–237 show a composition bias toward basic and acidic residues; the sequence is LREHMEAARPGE.

Belongs to the universal ribosomal protein uS3 family. Part of the 30S ribosomal subunit.

Its function is as follows. Binds the lower part of the 30S subunit head. The polypeptide is Small ribosomal subunit protein uS3 (Aeropyrum pernix (strain ATCC 700893 / DSM 11879 / JCM 9820 / NBRC 100138 / K1)).